Consider the following 743-residue polypeptide: Pentatricopeptide repeat-containing protein At2g16880 (743 aa).

PPR repeat units lie at residues 130-164 (SKAL…KLKP), 165-202 (NLLT…GVSL), 203-233 (NVQT…MVSE), 239-273 (DNVT…GLVP), 274-308 (NRVT…NVLP), 309-343 (DLCT…KLQP), 344-378 (DVVT…GVKA), 379-414 (NQVT…GFSP), 415-449 (DIVT…GIKM), 450-484 (NTIT…GFIV), 485-519 (DEVT…KITP), 520-554 (TVST…GLLP), 555-589 (DDST…SFKP), 590-620 (DNYT…LIEE), 624-658 (DTVT…GLEP), and 659-689 (DRFT…FSGK).

Belongs to the PPR family. P subfamily.

The chain is Pentatricopeptide repeat-containing protein At2g16880 from Arabidopsis thaliana (Mouse-ear cress).